The following is a 69-amino-acid chain: U2-agatoxin-Ao1g (69 aa).

An N-terminal signal peptide occupies residues 1–20 (MKAIISLLLISAMVFSMIEA). Positions 21–34 (VPVEEGLQLFEGER) are excised as a propeptide. Cystine bridges form between Cys36–Cys52, Cys43–Cys57, and Cys51–Cys67. Leu68 is subject to Leucine amide.

The protein belongs to the neurotoxin 01 (U2-agtx) family. As to expression, expressed by the venom gland.

The protein resides in the secreted. Insect active toxin causing rapid but reversible paralysis in crickets. No activity shown in mammals. Does not show effect on mammalian voltage-gated calcium channels. The protein is U2-agatoxin-Ao1g of Agelena orientalis (Funnel-web spider).